Reading from the N-terminus, the 468-residue chain is uncharacterized protein (468 aa).

Positions 1-19 (MRVLSVLLVALTVAGSAYS) are cleaved as a signal peptide. 2 N-linked (GlcNAc...) asparagine glycosylation sites follow: asparagine 86 and asparagine 334. Residues 401–421 (NPSTNLPETSPPTEQPTAPPA) are disordered. Over residues 409-421 (TSPPTEQPTAPPA) the composition is skewed to pro residues. Residue asparagine 435 is glycosylated (N-linked (GlcNAc...) asparagine). Asparagine 444 is lipidated: GPI-like-anchor amidated asparagine. Residues 445–468 (SASSIEMSKLVVAILSLFILAFFH) constitute a propeptide, removed in mature form.

The protein localises to the cell membrane. This is an uncharacterized protein from Dictyostelium discoideum (Social amoeba).